The following is a 317-amino-acid chain: Protoheme IX farnesyltransferase (317 aa).

A run of 9 helical transmembrane segments spans residues 36-56, 57-77, 108-128, 129-149, 157-177, 184-204, 230-247, 251-273, and 284-304; these read VMVLVIFTALVGMVVSDATVN, PVIAAISLLMIAVGAGASGCL, LAFGIVLSVGSVLILGLASNW, LAAGLLAFTIVFYAVIYSMWL, IVIGGAAGALPPVVGQAAVTG, LVLFAIIFIWTPPHFWALALV, IVWYSLLLAPLALVPVWL, GWLYAVVGVLGGLGMLAGAVQVY, and AAMGLFAFSILYLFLLFSALL.

Belongs to the UbiA prenyltransferase family. Protoheme IX farnesyltransferase subfamily.

Its subcellular location is the cell inner membrane. The enzyme catalyses heme b + (2E,6E)-farnesyl diphosphate + H2O = Fe(II)-heme o + diphosphate. It functions in the pathway porphyrin-containing compound metabolism; heme O biosynthesis; heme O from protoheme: step 1/1. Its function is as follows. Converts heme B (protoheme IX) to heme O by substitution of the vinyl group on carbon 2 of heme B porphyrin ring with a hydroxyethyl farnesyl side group. The protein is Protoheme IX farnesyltransferase of Methylorubrum populi (strain ATCC BAA-705 / NCIMB 13946 / BJ001) (Methylobacterium populi).